We begin with the raw amino-acid sequence, 249 residues long: tRNA 2'-phosphotransferase 1 (249 aa).

Methionine 1 is subject to N-acetylmethionine. Disordered regions lie at residues 1 to 25 (MNAP…RNVQ) and 220 to 249 (KPLS…KIQQ).

The protein belongs to the KptA/TPT1 family.

The enzyme catalyses 2'-phospho-[ligated tRNA] + NAD(+) = mature tRNA + ADP-alpha-D-ribose 1'',2''-cyclic phosphate + nicotinamide. In terms of biological role, catalyzes the last step of tRNA splicing, the transfer of the splice junction 2'-phosphate from ligated tRNA to NAD to produce ADP-ribose 1''-2'' cyclic phosphate. In Mus musculus (Mouse), this protein is tRNA 2'-phosphotransferase 1 (Trpt1).